The primary structure comprises 285 residues: MIHKQQLQAYLQLTRIDRPIGIYLVLWPALWALWLAADGMPPMSILIIFILGAVIMRSAGCVINDYADRHFDGYVTRTCARPLATGQLTERQALKFFFVLCLLAFGLVLFLNPFTILLSLGAVGLAILYPFMKRHTFWPQAFLGAAFAWAIPMAFAAIQNQVPWQAWVIFGVTLVWALVYDTAYAVADKEDDVKLGIKSTAILFGDRVQEIIGFFQAIMLLGFLWIGDLFGLSWLYYGSVLIAAGFFVYHQYLLSFDQPQKAFKAFLNNHWVGLVILIGIMLDTL.

The next 7 membrane-spanning stretches (helical) occupy residues isoleucine 20 to alanine 37, phenylalanine 96 to isoleucine 116, tryptophan 138 to isoleucine 158, alanine 166 to valine 186, isoleucine 211 to glycine 231, tryptophan 234 to leucine 254, and alanine 262 to leucine 282.

The protein belongs to the UbiA prenyltransferase family. Requires Mg(2+) as cofactor.

It is found in the cell inner membrane. It catalyses the reaction all-trans-octaprenyl diphosphate + 4-hydroxybenzoate = 4-hydroxy-3-(all-trans-octaprenyl)benzoate + diphosphate. It functions in the pathway cofactor biosynthesis; ubiquinone biosynthesis. Catalyzes the prenylation of para-hydroxybenzoate (PHB) with an all-trans polyprenyl group. Mediates the second step in the final reaction sequence of ubiquinone-8 (UQ-8) biosynthesis, which is the condensation of the polyisoprenoid side chain with PHB, generating the first membrane-bound Q intermediate 3-octaprenyl-4-hydroxybenzoate. This is 4-hydroxybenzoate octaprenyltransferase from Hydrogenovibrio crunogenus (strain DSM 25203 / XCL-2) (Thiomicrospira crunogena).